The following is a 291-amino-acid chain: Lysosomal amino acid transporter 1 homolog (291 aa).

Residues 1-37 (MVWKKLGSRNFSSCPSGSIQWIWDVLGECAQDGWDEA) are Lumenal-facing. Asn-10 carries an N-linked (GlcNAc...) asparagine glycan. The 67-residue stretch at 34-100 (WDEASVGLGL…LADQLPLQTY (67 aa)) folds into the PQ-loop 1 domain. Residues 38–58 (SVGLGLISILCFAASTFPQFI) form a helical membrane-spanning segment. At 59-71 (KAYKTGNMDQALS) the chain is on the cytoplasmic side. The helical transmembrane segment at 72–92 (LWFLLGWIGGDSCNLIGSFLA) threads the bilayer. Residues 93-98 (DQLPLQ) are Lumenal-facing. A helical membrane pass occupies residues 99 to 119 (TYTAVYYVLADLVMLTLYFYY). At 120-134 (KFRTRPSLLSAPINS) the chain is on the cytoplasmic side. Residues 135-155 (VLLFLMGMACATPLLSAAGPV) form a helical membrane-spanning segment. The Lumenal portion of the chain corresponds to 156–182 (AAPREAFRGRALLSVESGSKPFTRQEV). A helical membrane pass occupies residues 183-203 (IGFVIGSISSVLYLLSRLPQI). The PQ-loop 2 domain maps to 184 to 243 (GFVIGSISSVLYLLSRLPQIRTNFLRKSTQGISYSLFALVMLGNTLYGLSVLLKNPEEGQ). Residues 204–214 (RTNFLRKSTQG) lie on the Cytoplasmic side of the membrane. The chain crosses the membrane as a helical span at residues 215–235 (ISYSLFALVMLGNTLYGLSVL). At 236–254 (LKNPEEGQSEGSYLLHHLP) the chain is on the lumenal side. The chain crosses the membrane as a helical span at residues 255–275 (WLVGSLGVLLLDTIISIQFLV). Residues 276 to 291 (YRRSTAASELEPLLPS) are Cytoplasmic-facing. The short motif at 288–289 (LL) is the Di-leucine motif element.

It belongs to the laat-1 family.

The protein localises to the lysosome membrane. Its function is as follows. Amino acid transporter that specifically mediates the pH-dependent export of the cationic amino acids arginine, histidine and lysine from lysosomes. This is Lysosomal amino acid transporter 1 homolog from Homo sapiens (Human).